Here is an 84-residue protein sequence, read N- to C-terminus: MAHKKGGGSTKNGRDSNPKYLGVKAAGVSTVNAGTIILRQRGTAIKPGDNAGLGKDHTIFALVDGTVHFRNGRNNKKQVDIIPS.

The interval 1–20 (MAHKKGGGSTKNGRDSNPKY) is disordered.

It belongs to the bacterial ribosomal protein bL27 family.

The sequence is that of Large ribosomal subunit protein bL27 (rpmA) from Prosthecochloris vibrioformis (Chlorobium vibrioforme).